Reading from the N-terminus, the 251-residue chain is Cholesterol 25-hydroxylase-like protein (251 aa).

The next 3 helical transmembrane spans lie at 22–42, 69–89, and 108–128; these read FFPVLFSITVYLSFCLPFVLL, WSCLALSLYNHVVYIFPLSVL, and VVWDLAACLLLFDFQYFVWHL. The region spanning 113 to 247 is the Fatty acid hydroxylase domain; that stretch reads AACLLLFDFQ…FTHWDKLFGT (135 aa). Residues 126 to 130 carry the Histidine box-1 motif; the sequence is WHLLH. The Histidine box-2 signature appears at 141-145; that stretch reads HKVHH. The short motif at 222–228 is the Histidine box-3 element; that stretch reads HHDVHHQ.

The protein belongs to the sterol desaturase family. Fe cation is required as a cofactor.

It localises to the endoplasmic reticulum membrane. It carries out the reaction cholesterol + AH2 + O2 = 25-hydroxycholesterol + A + H2O. The catalysed reaction is cholesterol + NADPH + O2 + H(+) = 25-hydroxycholesterol + NADP(+) + H2O. In terms of biological role, catalyzes the formation of 25-hydroxycholesterol from cholesterol, leading to repress cholesterol biosynthetic enzymes. Plays a key role in cell positioning and movement in lymphoid tissues: 25-hydroxycholesterol is an intermediate in biosynthesis of 7-alpha,25-dihydroxycholesterol (7-alpha,25-OHC), an oxysterol that acts as a ligand for the G protein-coupled receptor GPR183/EBI2, a chemotactic receptor for a number of lymphoid cells. May play an important role in regulating lipid metabolism by synthesizing a corepressor that blocks sterol regulatory element binding protein (SREBP) processing. In testis, production of 25-hydroxycholesterol by macrophages may play a role in Leydig cell differentiation. The chain is Cholesterol 25-hydroxylase-like protein (ch25h) from Danio rerio (Zebrafish).